The following is a 491-amino-acid chain: Probable G-protein coupled receptor Mth-like 7 (491 aa).

The signal sequence occupies residues 1-22; that stretch reads MRLPWVIFCTVLLLIFTNNSNA. N-linked (GlcNAc...) asparagine glycans are attached at residues Asn-18 and Asn-42. Over 23–167 the chain is Extracellular; sequence DIPGCNYYDT…EEVSIQIFNK (145 aa). 3 disulfide bridges follow: Cys-27–Cys-80, Cys-82–Cys-87, and Cys-92–Cys-103. A helical membrane pass occupies residues 168–188; it reads CGLIVWFQDGKFWVTVDLFME. The Cytoplasmic segment spans residues 189 to 222; the sequence is KQDYCLYRHNFDSDFPKSMWIIRHRCTSHISPGS. A helical transmembrane segment spans residues 223-243; sequence LEILIITMICFVLTIAVYLYI. At 244-252 the chain is on the extracellular side; sequence KKLRNVTGK. Asn-248 carries an N-linked (GlcNAc...) asparagine glycan. Residues 253–273 traverse the membrane as a helical segment; the sequence is CIVCCIVSRFIQCLIMILDHL. Topologically, residues 274 to 325 are cytoplasmic; it reads NLLNGICSPAGYSSHFFRMASNLWLSVISYHTWKVLTSLNRVDPNYRFLRYN. Residues 326 to 346 form a helical membrane-spanning segment; it reads AFVWSTAAIMTGSIYIVNQIW. Topologically, residues 347-372 are extracellular; sequence ENDPSKWNWLPLVGFIRCSVKDWHPS. A helical transmembrane segment spans residues 373–393; the sequence is VWIYISGPSLALSTFNVAMFA. The Cytoplasmic segment spans residues 394–434; sequence LTAIYIRKVKGGINKFTNEEEGRINCINFDSQTYLQFLRLS. The helical transmembrane segment at 435-455 threads the bilayer; sequence IVMGLTWIFNVIPYSARLHIF. Topologically, residues 456-458 are extracellular; the sequence is WEW. The chain crosses the membrane as a helical span at residues 459 to 479; that stretch reads VGIISEYFHSAFGIVLFVLLV. At 480 to 491 the chain is on the cytoplasmic side; the sequence is LKRSTWTLMMDS.

Belongs to the G-protein coupled receptor 2 family. Mth subfamily.

It localises to the cell membrane. The polypeptide is Probable G-protein coupled receptor Mth-like 7 (mthl7) (Drosophila melanogaster (Fruit fly)).